Reading from the N-terminus, the 75-residue chain is Small ribosomal subunit protein eS31 (75 aa).

Residues Cys41, Cys44, Cys60, and Cys63 each contribute to the Zn(2+) site. The segment at 41–63 (CPRCGSIMAHHLKPNERWSCGKC) adopts a C4-type zinc-finger fold.

This sequence belongs to the eukaryotic ribosomal protein eS31 family. Part of the 30S ribosomal subunit. Zn(2+) serves as cofactor.

The sequence is that of Small ribosomal subunit protein eS31 from Saccharolobus solfataricus (strain ATCC 35092 / DSM 1617 / JCM 11322 / P2) (Sulfolobus solfataricus).